We begin with the raw amino-acid sequence, 390 residues long: Pepsin B (390 aa).

An N-terminal signal peptide occupies residues 1 to 16 (MKIQVLVLVCLHLSEG). A propeptide spans 17–59 (VERIILKKGKSIRQVMEERGVLETFLRNHPKVDPAAKYLFNND) (activation peptide). The region spanning 74–387 (YFGEISIGTP…DMAANRVGFA (314 aa)) is the Peptidase A1 domain. Aspartate 92 is a catalytic residue. 2 disulfide bridges follow: cysteine 105-cysteine 110 and cysteine 269-cysteine 273. Aspartate 278 is a catalytic residue. Cysteines 312 and 345 form a disulfide.

It belongs to the peptidase A1 family.

The protein localises to the secreted. The enzyme catalyses Degradation of gelatin, little activity on hemoglobin. Specificity on B chain of insulin more restricted than that of pepsin A. Does not cleave 1-Phe-|-Val-2, 4-Gln-|-His-5 or 23-Gly-|-Phe-24.. Hydrolyzes various peptides including beta-endorphin, insulin B chain, dynorphin A, and neurokinin A, with high specificity for the cleavage of the Phe-Xaa bonds. The sequence is that of Pepsin B (PGB) from Canis lupus familiaris (Dog).